An 894-amino-acid chain; its full sequence is Mitogen-activated protein kinase kinase kinase kinase 3 (894 aa).

M1 carries the post-translational modification N-acetylmethionine. The Protein kinase domain maps to 16–273 (FELIQRIGSG…AEKLLQHPFV (258 aa)). Residues 22–30 (IGSGTYGDV) and K45 each bind ATP. Residue D136 is the Proton acceptor of the active site. S329 is modified (phosphoserine). A disordered region spans residues 339–358 (DPPLRKETEPHHELPDSDGF). Residues 340 to 353 (PPLRKETEPHHELP) show a composition bias toward basic and acidic residues. The residue at position 398 (S398) is a Phosphoserine. Residues 408–537 (HVAHLEDDEG…VPKPISNGLP (130 aa)) are disordered. A compositionally biased stretch (pro residues) spans 473-487 (HVPPRPPPPRLPPQK). Over residues 508 to 520 (LYQQQSEQRGTNL) the composition is skewed to polar residues. The 312-residue stretch at 556–867 (PLKIHCATSW…IFRLLGSDRV (312 aa)) folds into the CNH domain.

This sequence belongs to the protein kinase superfamily. STE Ser/Thr protein kinase family. STE20 subfamily. Interacts with SH3GL2. Interaction appears to regulate MAP4K3-mediated JNK activation. It depends on Mg(2+) as a cofactor.

The enzyme catalyses L-seryl-[protein] + ATP = O-phospho-L-seryl-[protein] + ADP + H(+). The catalysed reaction is L-threonyl-[protein] + ATP = O-phospho-L-threonyl-[protein] + ADP + H(+). Its function is as follows. Serine/threonine kinase that plays a role in the response to environmental stress. Appears to act upstream of the JUN N-terminal pathway. Activator of the Hippo signaling pathway which plays a pivotal role in organ size control and tumor suppression by restricting proliferation and promoting apoptosis. MAP4Ks act in parallel to and are partially redundant with STK3/MST2 and STK4/MST2 in the phosphorylation and activation of LATS1/2, and establish MAP4Ks as components of the expanded Hippo pathway. The protein is Mitogen-activated protein kinase kinase kinase kinase 3 (Map4k3) of Mus musculus (Mouse).